A 700-amino-acid chain; its full sequence is Elongation factor G 1 (700 aa).

Residues 8 to 290 (ERYRNIGISA…AVIDYLPSPA (283 aa)) enclose the tr-type G domain. Residues 17–24 (AHIDAGKT), 88–92 (DTPGH), and 142–145 (NKMD) contribute to the GTP site.

This sequence belongs to the TRAFAC class translation factor GTPase superfamily. Classic translation factor GTPase family. EF-G/EF-2 subfamily.

Its subcellular location is the cytoplasm. In terms of biological role, catalyzes the GTP-dependent ribosomal translocation step during translation elongation. During this step, the ribosome changes from the pre-translocational (PRE) to the post-translocational (POST) state as the newly formed A-site-bound peptidyl-tRNA and P-site-bound deacylated tRNA move to the P and E sites, respectively. Catalyzes the coordinated movement of the two tRNA molecules, the mRNA and conformational changes in the ribosome. The polypeptide is Elongation factor G 1 (Bordetella bronchiseptica (strain ATCC BAA-588 / NCTC 13252 / RB50) (Alcaligenes bronchisepticus)).